Consider the following 222-residue polypeptide: Histidine biosynthesis bifunctional protein HisIE (222 aa).

A phosphoribosyl-AMP cyclohydrolase region spans residues 1–128 (MQPLSPAFID…SNALSPPADA (128 aa)). The segment at 129–222 (CTELFRVIES…AARRGAPRRH (94 aa)) is phosphoribosyl-ATP pyrophosphohydrolase.

The protein in the N-terminal section; belongs to the PRA-CH family. In the C-terminal section; belongs to the PRA-PH family.

Its subcellular location is the cytoplasm. The enzyme catalyses 1-(5-phospho-beta-D-ribosyl)-ATP + H2O = 1-(5-phospho-beta-D-ribosyl)-5'-AMP + diphosphate + H(+). It carries out the reaction 1-(5-phospho-beta-D-ribosyl)-5'-AMP + H2O = 1-(5-phospho-beta-D-ribosyl)-5-[(5-phospho-beta-D-ribosylamino)methylideneamino]imidazole-4-carboxamide. The protein operates within amino-acid biosynthesis; L-histidine biosynthesis; L-histidine from 5-phospho-alpha-D-ribose 1-diphosphate: step 2/9. It functions in the pathway amino-acid biosynthesis; L-histidine biosynthesis; L-histidine from 5-phospho-alpha-D-ribose 1-diphosphate: step 3/9. The polypeptide is Histidine biosynthesis bifunctional protein HisIE (Parasynechococcus marenigrum (strain WH8102)).